The following is a 511-amino-acid chain: Bifunctional purine biosynthesis protein PurH (511 aa).

An MGS-like domain is found at 1 to 145 (MKKRALVSVS…KNHKFVSVIV (145 aa)).

It belongs to the PurH family.

It carries out the reaction (6R)-10-formyltetrahydrofolate + 5-amino-1-(5-phospho-beta-D-ribosyl)imidazole-4-carboxamide = 5-formamido-1-(5-phospho-D-ribosyl)imidazole-4-carboxamide + (6S)-5,6,7,8-tetrahydrofolate. The catalysed reaction is IMP + H2O = 5-formamido-1-(5-phospho-D-ribosyl)imidazole-4-carboxamide. Its pathway is purine metabolism; IMP biosynthesis via de novo pathway; 5-formamido-1-(5-phospho-D-ribosyl)imidazole-4-carboxamide from 5-amino-1-(5-phospho-D-ribosyl)imidazole-4-carboxamide (10-formyl THF route): step 1/1. The protein operates within purine metabolism; IMP biosynthesis via de novo pathway; IMP from 5-formamido-1-(5-phospho-D-ribosyl)imidazole-4-carboxamide: step 1/1. This is Bifunctional purine biosynthesis protein PurH from Bacillus cereus (strain 03BB102).